The sequence spans 607 residues: Probable CoA ligase CCL8 (607 aa).

ATP contacts are provided by residues 236–244 (TSGTTGKPK), 391–396 (ERYGMT), D474, 486–489 (ILGR), and K591. An SBD1 region spans residues 305 to 391 (SVRGIWQRWR…QTITGHRLLE (87 aa)). The interval 392–453 (RYGMTEFVMA…VRSPSLFKEY (62 aa)) is SBD2.

The protein belongs to the ATP-dependent AMP-binding enzyme family. Mostly expressed at low levels in glandular trichomes (lupulin glands) after flowering, and, to a lower extent, in stems, leaves, flowers and cones.

It is found in the cytoplasm. Its subcellular location is the cytosol. This Humulus lupulus (European hop) protein is Probable CoA ligase CCL8.